The following is a 301-amino-acid chain: Probable alpha-L-glutamate ligase 2 (301 aa).

The 184-residue stretch at 104–287 folds into the ATP-grasp domain; it reads LQLLSRKGIG…VAEPIVEYIE (184 aa). ATP is bound by residues lysine 141, 178–179, aspartate 187, and 211–213; these read EY and RSN. Residues aspartate 248, glutamate 260, and asparagine 262 each contribute to the Mg(2+) site. Aspartate 248, glutamate 260, and asparagine 262 together coordinate Mn(2+).

This sequence belongs to the RimK family. The cofactor is Mg(2+). It depends on Mn(2+) as a cofactor.

This chain is Probable alpha-L-glutamate ligase 2, found in Shewanella amazonensis (strain ATCC BAA-1098 / SB2B).